Consider the following 178-residue polypeptide: Probable inosine/xanthosine triphosphatase (178 aa).

Belongs to the YjjX NTPase family. In terms of assembly, homodimer. Mg(2+) serves as cofactor. The cofactor is Mn(2+).

The catalysed reaction is XTP + H2O = XDP + phosphate + H(+). The enzyme catalyses ITP + H2O = IDP + phosphate + H(+). Its function is as follows. Phosphatase that hydrolyzes non-canonical purine nucleotides such as XTP and ITP to their respective diphosphate derivatives. Probably excludes non-canonical purines from DNA/RNA precursor pool, thus preventing their incorporation into DNA/RNA and avoiding chromosomal lesions. In Pyrobaculum aerophilum (strain ATCC 51768 / DSM 7523 / JCM 9630 / CIP 104966 / NBRC 100827 / IM2), this protein is Probable inosine/xanthosine triphosphatase.